The chain runs to 215 residues: Probable nicotinate-nucleotide adenylyltransferase (215 aa).

It belongs to the NadD family.

It catalyses the reaction nicotinate beta-D-ribonucleotide + ATP + H(+) = deamido-NAD(+) + diphosphate. Its pathway is cofactor biosynthesis; NAD(+) biosynthesis; deamido-NAD(+) from nicotinate D-ribonucleotide: step 1/1. Functionally, catalyzes the reversible adenylation of nicotinate mononucleotide (NaMN) to nicotinic acid adenine dinucleotide (NaAD). The protein is Probable nicotinate-nucleotide adenylyltransferase of Fervidobacterium nodosum (strain ATCC 35602 / DSM 5306 / Rt17-B1).